The primary structure comprises 450 residues: NADH-quinone oxidoreductase subunit H (450 aa).

Helical transmembrane passes span 18–38, 91–111, 128–148, 169–189, 201–221, 262–282, 292–312, 324–344, and 358–378; these read WWLVLGKALAIFVFLVLTPLL, ILAPVIAAVPAFMAFAVIPFG, LPVAVLYVLAATSIGVYGIVL, VISYEIAMALSFAAVFLDAGT, HTWYVFLLLPSFLIYVTSMVG, VTVSALATTLFLGGWHAPFPL, WWPVLWFTLKVWGFLFVFVWL, FMGLGWKILIPISLVWVMIVA, and SIALVVAGLVVALVVVVLLWK. A disordered region spans residues 387-450; it reads APEKPVEPRG…TGPTQENSDD (64 aa). Residues 390–400 are compositionally biased toward basic and acidic residues; the sequence is KPVEPRGRAEL. Polar residues predominate over residues 433–450; sequence VSVTGAHSTGPTQENSDD.

The protein belongs to the complex I subunit 1 family. As to quaternary structure, NDH-1 is composed of 14 different subunits. Subunits NuoA, H, J, K, L, M, N constitute the membrane sector of the complex.

The protein resides in the cell membrane. It carries out the reaction a quinone + NADH + 5 H(+)(in) = a quinol + NAD(+) + 4 H(+)(out). Functionally, NDH-1 shuttles electrons from NADH, via FMN and iron-sulfur (Fe-S) centers, to quinones in the respiratory chain. The immediate electron acceptor for the enzyme in this species is believed to be ubiquinone. Couples the redox reaction to proton translocation (for every two electrons transferred, four hydrogen ions are translocated across the cytoplasmic membrane), and thus conserves the redox energy in a proton gradient. This subunit may bind ubiquinone. The sequence is that of NADH-quinone oxidoreductase subunit H from Rhodococcus jostii (strain RHA1).